Here is a 540-residue protein sequence, read N- to C-terminus: MEKAKLSSALFAGTHFDRKRFAGDFARFRQGPPAPDVASAAAPSPEKKRKRQSKAKAKKSKKRRAEGADSASDAVEGFSVFKGLAAKKDEDDSEKKVETGKSEDSEVVRRRKEVEREIERAAILRKKFDIHISGQNVPAPLENFEELVSRYGCDSYLVGNLSKLGFQEPTPIQRQAIPILLSGRECFACAPTGSGKTLAFLFPILMKIKPGSKEGVKAVILCPTRELAAQTTRECKKLAKGRKFYIKLMTKDLSKSGNFKDMHCDILISTPLRLDHAVQKRDLDLSRVEYLVLDESDKLFELGFVEVIDSVVKACSNPSIIRSLFSATLPDSIETLARTIMHDAVRVIVGRKNSASSLIKQKLIFAGTEKGKLLALRQSFAESLNPPVLIFVQSKERAKELYKELAFDDVRADVIHADLDEEQRQDAVDNLRAGKTWVLIATEVIARGMDFKGVNCVINYDFPESASAYIHRIGRSGRAGRSGEAITFFTEEDKPFLRNIANVLISSGCEVPSWIKALPKLKRKKHRVNRDPISTLPDED.

Residues Asp-24–Asp-73 form a disordered region. The span at Lys-47–Arg-64 shows a compositional bias: basic residues. The stretch at Lys-101–Asp-129 forms a coiled coil. The Q motif motif lies at Glu-146–Arg-174. A Helicase ATP-binding domain is found at Ile-177–Val-347. ATP is bound at residue Ala-190 to Thr-197. Residues Asp-294–Asp-297 carry the DEAD box motif. The Helicase C-terminal domain maps to Ala-375 to Pro-519.

Belongs to the DEAD box helicase family. DDX52/ROK1 subfamily.

The catalysed reaction is ATP + H2O = ADP + phosphate + H(+). The polypeptide is DEAD-box ATP-dependent RNA helicase 57 (Oryza sativa subsp. japonica (Rice)).